Consider the following 417-residue polypeptide: Cobalamin binding intrinsic factor (417 aa).

The first 18 residues, 1 to 18 (MAWFALYLLSLLWATAGT), serve as a signal peptide directing secretion. Cystine bridges form between cysteine 26/cysteine 246, cysteine 103/cysteine 288, and cysteine 143/cysteine 182. Aspartate 171 serves as a coordination point for cob(II)alamin. Serine 191 carries the post-translational modification Phosphoserine. Positions 222 and 270 each coordinate cob(II)alamin. N-linked (GlcNAc...) asparagine glycosylation is found at asparagine 311, asparagine 330, and asparagine 334. Cob(II)alamin-binding positions include 365 to 370 (SWGLVV) and 386 to 395 (WQFLSGVTPL). N-linked (GlcNAc...) asparagine glycosylation occurs at asparagine 413.

Belongs to the eukaryotic cobalamin transport proteins family. Interacts with CUBN (via CUB domains). In terms of tissue distribution, gastric mucosa.

It localises to the secreted. Functionally, promotes absorption of the essential vitamin cobalamin (Cbl) in the ileum. After interaction with CUBN, the CBLIF-cobalamin complex is internalized via receptor-mediated endocytosis. This Homo sapiens (Human) protein is Cobalamin binding intrinsic factor.